We begin with the raw amino-acid sequence, 241 residues long: Uridylate kinase (241 aa).

ATP is bound at residue 9–10 (GS). Gly44 is a UMP binding site. ATP is bound by residues Gly45 and Arg49. UMP is bound by residues Asp66 and 114-120 (VVAGQTT). Thr140, Phe146, and Asp149 together coordinate ATP.

It belongs to the UMP kinase family. In terms of assembly, homohexamer.

The protein resides in the cytoplasm. It catalyses the reaction UMP + ATP = UDP + ADP. The protein operates within pyrimidine metabolism; CTP biosynthesis via de novo pathway; UDP from UMP (UMPK route): step 1/1. With respect to regulation, inhibited by UTP. In terms of biological role, catalyzes the reversible phosphorylation of UMP to UDP. This is Uridylate kinase from Halobacterium salinarum (strain ATCC 29341 / DSM 671 / R1).